The primary structure comprises 322 residues: tRNA U34 carboxymethyltransferase (322 aa).

Residues K91, W105, K110, G129, L179–E180, M195, Y199, and R314 contribute to the carboxy-S-adenosyl-L-methionine site.

It belongs to the class I-like SAM-binding methyltransferase superfamily. CmoB family. As to quaternary structure, homotetramer.

It catalyses the reaction carboxy-S-adenosyl-L-methionine + 5-hydroxyuridine(34) in tRNA = 5-carboxymethoxyuridine(34) in tRNA + S-adenosyl-L-homocysteine + H(+). In terms of biological role, catalyzes carboxymethyl transfer from carboxy-S-adenosyl-L-methionine (Cx-SAM) to 5-hydroxyuridine (ho5U) to form 5-carboxymethoxyuridine (cmo5U) at position 34 in tRNAs. This chain is tRNA U34 carboxymethyltransferase, found in Pseudomonas aeruginosa (strain LESB58).